Reading from the N-terminus, the 657-residue chain is Protein FAM200B (657 aa).

It belongs to the FAM200 family.

The chain is Protein FAM200B from Homo sapiens (Human).